The sequence spans 246 residues: 1-(5-phosphoribosyl)-5-[(5-phosphoribosylamino)methylideneamino] imidazole-4-carboxamide isomerase (246 aa).

Asp-8 functions as the Proton acceptor in the catalytic mechanism. Catalysis depends on Asp-131, which acts as the Proton donor.

This sequence belongs to the HisA/HisF family.

The protein localises to the cytoplasm. It catalyses the reaction 1-(5-phospho-beta-D-ribosyl)-5-[(5-phospho-beta-D-ribosylamino)methylideneamino]imidazole-4-carboxamide = 5-[(5-phospho-1-deoxy-D-ribulos-1-ylimino)methylamino]-1-(5-phospho-beta-D-ribosyl)imidazole-4-carboxamide. It participates in amino-acid biosynthesis; L-histidine biosynthesis; L-histidine from 5-phospho-alpha-D-ribose 1-diphosphate: step 4/9. The chain is 1-(5-phosphoribosyl)-5-[(5-phosphoribosylamino)methylideneamino] imidazole-4-carboxamide isomerase from Bordetella petrii (strain ATCC BAA-461 / DSM 12804 / CCUG 43448).